The following is a 346-amino-acid chain: MGVTELGKLIGKEVRREVKLESLSGKCIALDAYNALYQFLASIRQPDGTPLMDRAGRITSHLSGLFYRTINLLEAGIRPVYVFDGKPPEFKLAEIEERRKTREKAMEEVLRAIKEGRREDVAKYAKRAVFITSEMVDEAKRLLSYMGVPWVQAPSEGEAQAAYMARKGHCWAVGSQDYDSLLFGSPKLVRNLAVSPKRKIGEEVIELTPEIIELDAVLRALRLKNREQLIDLAILLGTDYNPDGVPGVGPQKALKLIWEFGSLEKLLETVLKGAYFPIDPLEIKKFFLNPPVTDQYATEVRDPDEAALKDFLIREHDFSEERVSKALERLRKARGKLKTSSLDSFF.

An N-domain region spans residues 1–102 (MGVTELGKLI…AEIEERRKTR (102 aa)). Residues D31, D84, E156, E158, D177, D179, and D239 each coordinate Mg(2+). Positions 120–261 (DVAKYAKRAV…KALKLIWEFG (142 aa)) are I-domain.

This sequence belongs to the XPG/RAD2 endonuclease family. FEN1 subfamily. As to quaternary structure, interacts with PCNA. PCNA stimulates the nuclease activity without altering cleavage specificity. Mg(2+) is required as a cofactor.

In terms of biological role, structure-specific nuclease with 5'-flap endonuclease and 5'-3' exonuclease activities involved in DNA replication and repair. During DNA replication, cleaves the 5'-overhanging flap structure that is generated by displacement synthesis when DNA polymerase encounters the 5'-end of a downstream Okazaki fragment. Binds the unpaired 3'-DNA end and kinks the DNA to facilitate 5' cleavage specificity. Cleaves one nucleotide into the double-stranded DNA from the junction in flap DNA, leaving a nick for ligation. Also involved in the base excision repair (BER) pathway. Acts as a genome stabilization factor that prevents flaps from equilibrating into structures that lead to duplications and deletions. Also possesses 5'-3' exonuclease activity on nicked or gapped double-stranded DNA. In Pyrobaculum aerophilum (strain ATCC 51768 / DSM 7523 / JCM 9630 / CIP 104966 / NBRC 100827 / IM2), this protein is Flap endonuclease 1.